The primary structure comprises 505 residues: Calcium/calmodulin-dependent protein kinase kinase 1 (505 aa).

The segment at 28–66 is disordered; that stretch reads LEEADEGPEPARNGVDPPPRARAASVIPGSASRPTPVRP. Phosphoserine occurs at positions 67 and 74. Arg78 carries the asymmetric dimethylarginine modification. The interval 84–105 is disordered; it reads LGAQVGPYSTGPASHISPRSWR. A Phosphoserine modification is found at Ser100. Thr108 is modified (phosphothreonine). Residues 128-409 enclose the Protein kinase domain; the sequence is YKLQSEIGKG…VSDIKLHPWV (282 aa). Residues 134–142 and Lys157 each bind ATP; that span reads IGKGAYGVV. The tract at residues 167–189 is RP domain; that stretch reads QYGFPRRPPPRGSQATQGGPAKQ. Asp275 (proton acceptor) is an active-site residue. Residues 435 to 440 are autoinhibitory domain; that stretch reads KNSVRL. The interval 438 to 463 is calmodulin-binding; the sequence is VRLIPSWTTVILVKSMLRKRSFGNPF. Ser458, Ser475, and Ser492 each carry phosphoserine. The segment at 460-505 is disordered; the sequence is GNPFEPQARREERSMSAPGSLLMKEGCGEGCKSPELPGVQEDEAAS.

It belongs to the protein kinase superfamily. Ser/Thr protein kinase family. In terms of assembly, interacts with CAMK4 and calmodulin. In terms of processing, appears to be autophosphorylated in a Ca(2+)/calmodulin-dependent manner. Phosphorylated at multiple sites by PRCAKA/PKA. Phosphorylation of Ser-458 is blocked upon binding to Ca(2+)/calmodulin. In vitro, phosphorylated by CAMK1 and CAMK4. Widely expressed. Differentially expressed in various brain regions.

The protein localises to the cytoplasm. It is found in the nucleus. The catalysed reaction is L-seryl-[protein] + ATP = O-phospho-L-seryl-[protein] + ADP + H(+). The enzyme catalyses L-threonyl-[protein] + ATP = O-phospho-L-threonyl-[protein] + ADP + H(+). With respect to regulation, activated by Ca(2+)/calmodulin. Binding of calmodulin may relieve intrasteric autoinhibition. Partially inhibited upon phosphorylation by PRCAKA/PKA. May be regulated through phosphorylation by CAMK1 and CAMK4. Calcium/calmodulin-dependent protein kinase that belongs to a proposed calcium-triggered signaling cascade involved in a number of cellular processes. Phosphorylates CAMK1, CAMK1D, CAMK1G and CAMK4. Involved in regulating cell apoptosis. Promotes cell survival by phosphorylating AKT1/PKB that inhibits pro-apoptotic BAD/Bcl2-antagonist of cell death. In Mus musculus (Mouse), this protein is Calcium/calmodulin-dependent protein kinase kinase 1 (Camkk1).